Here is a 94-residue protein sequence, read N- to C-terminus: Large ribosomal subunit protein bL25 (94 aa).

The protein belongs to the bacterial ribosomal protein bL25 family. As to quaternary structure, part of the 50S ribosomal subunit; part of the 5S rRNA/L5/L18/L25 subcomplex. Contacts the 5S rRNA. Binds to the 5S rRNA independently of L5 and L18.

In terms of biological role, this is one of the proteins that binds to the 5S RNA in the ribosome where it forms part of the central protuberance. This Shigella boydii serotype 18 (strain CDC 3083-94 / BS512) protein is Large ribosomal subunit protein bL25.